The primary structure comprises 374 residues: WAT1-related protein At2g39510 (374 aa).

The next 10 membrane-spanning stretches (helical) occupy residues 9 to 29 (FITV…AKFA), 38 to 58 (VLAS…AYFL), 64 to 84 (PKMT…EPTI), 99 to 119 (TFTA…AWIF), 135 to 155 (ILGT…KGPL), 182 to 202 (GASL…LQAI), 212 to 232 (SLTA…ALFI), 249 to 269 (LAAV…QGVI), 284 to 304 (LSMV…MFLG), and 306 to 326 (ILGA…KSKD). EamA domains lie at 19–147 (YAGL…GAML) and 191–320 (ICWA…YSVL). The tract at residues 350 to 374 (SKANAKMDTNDASVVISRPNTNESV) is disordered.

Belongs to the drug/metabolite transporter (DMT) superfamily. Plant drug/metabolite exporter (P-DME) (TC 2.A.7.4) family.

It is found in the membrane. This chain is WAT1-related protein At2g39510, found in Arabidopsis thaliana (Mouse-ear cress).